Reading from the N-terminus, the 517-residue chain is zeta-carotene-forming phytoene desaturase (517 aa).

An FAD-binding site is contributed by 11–44 (VVVGAGVGGLAAAARLAHQGFDVQVFEKTQGPGG).

The protein belongs to the carotenoid/retinoid oxidoreductase family. It depends on FAD as a cofactor.

The enzyme catalyses 15-cis-phytoene + 2 A = all-trans-zeta-carotene + 2 AH2. It functions in the pathway carotenoid biosynthesis; lycopene biosynthesis. In terms of biological role, dehydrogenates carotenes in the cis conformation: has cis-to-trans isomerase activity and mediates dehydrogenation of cis-phytoene, producing zeta-carotene via the intermediary of phytofluene by the symmetrical introduction of 2 double bonds at the C-11 and C-11' positions of phytoene. This chain is zeta-carotene-forming phytoene desaturase (carA2), found in Myxococcus xanthus.